Consider the following 207-residue polypeptide: Protein lin-7 homolog B (207 aa).

The Kinase interacting site signature appears at 1 to 13; that stretch reads MAALVEPLGLERD. One can recognise an L27 domain in the interval 10 to 65; that stretch reads LERDVSRAVELLERLQRSGELPPQKLQALQRVLQSRFCSAIREVYEQLYDTLDITG. Residues 93-175 enclose the PDZ domain; sequence VVELPKTDEG…SVKLVVRYTP (83 aa). The tract at residues 187–207 is disordered; sequence KMRSARRRQQHHSYSSLESRG. Over residues 198–207 the composition is skewed to polar residues; it reads HSYSSLESRG.

Belongs to the lin-7 family. As to quaternary structure, forms two exclusive ternary complexes with CASK and CASKIN1. The brain-specific heterotrimeric complex (LIN-10-LIN-2-LIN-7 complex) composed of at least APBA1, CASK, and LIN7, associates with the motor protein KIF17 to transport vesicles along microtubules. Forms a heterotrimeric complex composed of MMP5, LIN7B and PATJ; the N-terminal L27 domain of PALS1 interacts with the L27 domain of PATJ and the C-terminal L27 domain of PALS1 interacts with the L27 domain of LIN7B. Forms a heterotrimeric complex with DLG1 and CASK via their L27 domains. Interacts with DLG4 and GRIN2B as well as CDH1 and CTNNB1, the channels KCNJ12/Kir2.2, KCNJ4/Kir2.3 and probably KCNJ2/Kir2.1 and SLC6A12/BGT-1 via its PDZ domain. The association of LIN7A with cadherin and beta-catenin is calcium-dependent, occurs at synaptic junctions and requires the actin cytoskeleton. Interacts with EGFR, ERBB2, ERBB3 and ERBB4 with both PDZ and KID domains. Associates with KIF17 via APBA1. Interacts with ASIC3. Interacts with TOPK. Interacts with RTKN. Interacts with APBA1. Interacts with MPP7. Interacts with DLG2. Interacts with DLG3. In terms of tissue distribution, expressed only in brain.

It is found in the cell membrane. It localises to the basolateral cell membrane. Its subcellular location is the cell junction. The protein resides in the postsynaptic density membrane. The protein localises to the tight junction. Functionally, plays a role in establishing and maintaining the asymmetric distribution of channels and receptors at the plasma membrane of polarized cells. Forms membrane-associated multiprotein complexes that may regulate delivery and recycling of proteins to the correct membrane domains. The tripartite complex composed of LIN7 (LIN7A, LIN7B or LIN7C), CASK and APBA1 associates with the motor protein KIF17 to transport vesicles containing N-methyl-D-aspartate (NMDA) receptor subunit NR2B along microtubules. This complex may have the potential to couple synaptic vesicle exocytosis to cell adhesion in brain. Ensures the proper localization of GRIN2B (subunit 2B of the NMDA receptor) to neuronal postsynaptic density and may function in localizing synaptic vesicles at synapses where it is recruited by beta-catenin and cadherin. Required to localize Kir2 channels, GABA transporter (SLC6A12) and EGFR/ERBB1, ERBB2, ERBB3 and ERBB4 to the basolateral membrane of epithelial cells. May increase the amplitude of ASIC3 acid-evoked currents by stabilizing the channel at the cell surface. This is Protein lin-7 homolog B (Lin7b) from Rattus norvegicus (Rat).